We begin with the raw amino-acid sequence, 107 residues long: U1-lycotoxin-Ls1h (107 aa).

Positions 1-20 (MMKVLVVVALLVTLISYSSS) are cleaved as a signal peptide. Positions 21 to 41 (EGIDDLEADELLSLMANEQTR) are excised as a propeptide. 3 disulfides stabilise this stretch: cysteine 44/cysteine 59, cysteine 51/cysteine 68, and cysteine 70/cysteine 84.

Belongs to the neurotoxin 19 (CSTX) family. 04 (U1-Lctx) subfamily. As to expression, expressed by the venom gland.

The protein localises to the secreted. The sequence is that of U1-lycotoxin-Ls1h from Lycosa singoriensis (Wolf spider).